The following is a 108-amino-acid chain: uncharacterized protein (108 aa).

3 helical membrane passes run 26-46, 54-74, and 84-104; these read GAVY…ALII, LMTL…PLIF, and INYQ…CIYM.

It is found in the cell membrane. This is an uncharacterized protein from Methanocaldococcus jannaschii (strain ATCC 43067 / DSM 2661 / JAL-1 / JCM 10045 / NBRC 100440) (Methanococcus jannaschii).